The primary structure comprises 296 residues: Tyrosine recombinase XerC (296 aa).

One can recognise a Core-binding (CB) domain in the interval 1-84 (MEKIQQAYLY…TLRSFYEYWM (84 aa)). Residues 105–286 (YLPHFFYEEE…TNEQLRKVYL (182 aa)) form the Tyr recombinase domain. Catalysis depends on residues arginine 145, lysine 169, histidine 238, arginine 241, and histidine 264. Tyrosine 273 acts as the O-(3'-phospho-DNA)-tyrosine intermediate in catalysis.

Belongs to the 'phage' integrase family. XerC subfamily. In terms of assembly, forms a cyclic heterotetrameric complex composed of two molecules of XerC and two molecules of XerD.

The protein localises to the cytoplasm. Functionally, site-specific tyrosine recombinase, which acts by catalyzing the cutting and rejoining of the recombining DNA molecules. The XerC-XerD complex is essential to convert dimers of the bacterial chromosome into monomers to permit their segregation at cell division. It also contributes to the segregational stability of plasmids. This is Tyrosine recombinase XerC from Staphylococcus saprophyticus subsp. saprophyticus (strain ATCC 15305 / DSM 20229 / NCIMB 8711 / NCTC 7292 / S-41).